Consider the following 24-residue polypeptide: Brevinin-1 (24 aa).

A disulfide bridge connects residues cysteine 18 and cysteine 24.

This sequence belongs to the frog skin active peptide (FSAP) family. Brevinin subfamily. Expressed by the skin glands.

It is found in the secreted. In terms of biological role, shows antibacterial activity against representative Gram-negative and Gram-positive bacterial species, and a very high hemolytic activity. The sequence is that of Brevinin-1 from Pelophylax porosus brevipodus (Nagoya Daruma pond frog).